A 235-amino-acid polypeptide reads, in one-letter code: Large ribosomal subunit protein uL1 (235 aa).

The protein belongs to the universal ribosomal protein uL1 family. Part of the 50S ribosomal subunit.

Binds directly to 23S rRNA. The L1 stalk is quite mobile in the ribosome, and is involved in E site tRNA release. Its function is as follows. Protein L1 is also a translational repressor protein, it controls the translation of the L11 operon by binding to its mRNA. The polypeptide is Large ribosomal subunit protein uL1 (Nitratidesulfovibrio vulgaris (strain DSM 19637 / Miyazaki F) (Desulfovibrio vulgaris)).